A 295-amino-acid chain; its full sequence is MTKQIQKTVSVCIIGRPNSGKSTLLNRIIGEKLSIVTPKVQTTRSIITGIITLNDTQIILYDTPGIFEPKGTLEKAMVRCAWSSLHSADIVMLIIDSLKPLDSITHDILNKLRSLNVVPVFLLNKIDVESKYIDDTKAFLAENYSDSLLFPISAISGENVDKLLEYITSKAKIAPWLYEEDDITDLPMRFIAAEITREQLFLGLQQELPYKLTVQTEKWEELKDKSVKINQIIVVSRESYKTIILGKNGSKIKELGAKSRMQMQQFFGFPVHLFLFVKVRELWEDNSDYYEYMKI.

The Era-type G domain occupies 7 to 176 (KTVSVCIIGR…ITSKAKIAPW (170 aa)). The G1 stretch occupies residues 15-22 (GRPNSGKS). 15-22 (GRPNSGKS) is a binding site for GTP. A G2 region spans residues 41-45 (QTTRS). Residues 62–65 (DTPG) form a G3 region. Residues 62-66 (DTPGI) and 124-127 (NKID) contribute to the GTP site. Residues 124 to 127 (NKID) form a G4 region. Residues 152–154 (ISA) are G5. The region spanning 204-281 (LQQELPYKLT…HLFLFVKVRE (78 aa)) is the KH type-2 domain.

It belongs to the TRAFAC class TrmE-Era-EngA-EngB-Septin-like GTPase superfamily. Era GTPase family. In terms of assembly, monomer.

The protein resides in the cytoplasm. It localises to the cell inner membrane. In terms of biological role, an essential GTPase that binds both GDP and GTP, with rapid nucleotide exchange. Plays a role in 16S rRNA processing and 30S ribosomal subunit biogenesis and possibly also in cell cycle regulation and energy metabolism. The polypeptide is GTPase Era (Rickettsia bellii (strain OSU 85-389)).